The primary structure comprises 274 residues: MQNITQSWFVQGMIKATTDAWLKGWDERNGGNLTLRLDDADIAPYHDNFHAQPRYIPLSQPMPLLANTPFIVTGSGKFFRNVQLDPAANLGVVKVDSDGAGYHILWGLTHEAVPTSELPAHFLSHCERIKATNGKDRVIMHCHATNLIALTYVLENDTAVFTRQLWEGSTECLVVFPDGVGILPWMVPGTDEIGQATAQEMQKHSLVLWPFHGVFGSGPTLDEAFGLIDTAEKSAEVLVKIYSMGGMKQTITREELIALGERFGVTPLASALAL.

The active site involves Glu117. 3 residues coordinate Zn(2+): His141, His143, and His212.

It belongs to the aldolase class II family. RhaD subfamily. As to quaternary structure, homotetramer. Requires Zn(2+) as cofactor.

It localises to the cytoplasm. It catalyses the reaction L-rhamnulose 1-phosphate = (S)-lactaldehyde + dihydroxyacetone phosphate. Its pathway is carbohydrate degradation; L-rhamnose degradation; glycerone phosphate from L-rhamnose: step 3/3. Its function is as follows. Catalyzes the reversible cleavage of L-rhamnulose-1-phosphate to dihydroxyacetone phosphate (DHAP) and L-lactaldehyde. The sequence is that of Rhamnulose-1-phosphate aldolase from Escherichia fergusonii (strain ATCC 35469 / DSM 13698 / CCUG 18766 / IAM 14443 / JCM 21226 / LMG 7866 / NBRC 102419 / NCTC 12128 / CDC 0568-73).